A 421-amino-acid polypeptide reads, in one-letter code: Nucleoprotein (421 aa).

Composition is skewed to polar residues over residues Met1–Ser11 and Thr21–Gly30. Positions Met1–Thr49 are disordered. Residues Arg41 to Ser186 form an RNA-binding region. The CoV N NTD domain maps to Asn48 to Gly175. Arg92, Arg107, and Arg149 together coordinate RNA. Disordered stretches follow at residues Pro168–Gly213, Lys233–Tyr268, and Phe363–Ala421. Ser176 carries the post-translational modification Phosphoserine; by host. Positions Gly179–Ser206 are enriched in low complexity. Over residues Lys233–Lys248 the composition is skewed to polar residues. Positions Thr247 to Pro364 constitute a CoV N CTD domain. The segment at Pro258–Lys361 is dimerization. Over residues Glu367–Glu378 the composition is skewed to basic and acidic residues. Positions Arg405 to Ala421 are enriched in polar residues.

Belongs to the betacoronavirus nucleocapsid protein family. As to quaternary structure, homooligomer. Both monomeric and oligomeric forms interact with RNA. Interacts with protein M. Interacts with NSP3; this interaction serves to tether the genome to the newly translated replicase-transcriptase complex at a very early stage of infection. In terms of processing, ADP-ribosylated. The ADP-ribosylation is retained in the virion during infection. Phosphorylated on serine and threonine residues.

The protein localises to the virion. The protein resides in the host endoplasmic reticulum-Golgi intermediate compartment. It localises to the host Golgi apparatus. Its function is as follows. Packages the positive strand viral genome RNA into a helical ribonucleocapsid (RNP) and plays a fundamental role during virion assembly through its interactions with the viral genome and membrane protein M. Plays an important role in enhancing the efficiency of subgenomic viral RNA transcription as well as viral replication. The protein is Nucleoprotein of Bat coronavirus Rp3/2004 (BtCoV/Rp3/2004).